The primary structure comprises 236 residues: 1-(5-phosphoribosyl)-5-[(5-phosphoribosylamino)methylideneamino] imidazole-4-carboxamide isomerase (236 aa).

Asp8 serves as the catalytic Proton acceptor. Asp129 serves as the catalytic Proton donor.

This sequence belongs to the HisA/HisF family.

The protein resides in the cytoplasm. The enzyme catalyses 1-(5-phospho-beta-D-ribosyl)-5-[(5-phospho-beta-D-ribosylamino)methylideneamino]imidazole-4-carboxamide = 5-[(5-phospho-1-deoxy-D-ribulos-1-ylimino)methylamino]-1-(5-phospho-beta-D-ribosyl)imidazole-4-carboxamide. The protein operates within amino-acid biosynthesis; L-histidine biosynthesis; L-histidine from 5-phospho-alpha-D-ribose 1-diphosphate: step 4/9. The sequence is that of 1-(5-phosphoribosyl)-5-[(5-phosphoribosylamino)methylideneamino] imidazole-4-carboxamide isomerase from Ruminiclostridium cellulolyticum (strain ATCC 35319 / DSM 5812 / JCM 6584 / H10) (Clostridium cellulolyticum).